Reading from the N-terminus, the 943-residue chain is 2-oxoglutarate dehydrogenase E1 component (943 aa).

It belongs to the alpha-ketoglutarate dehydrogenase family. In terms of assembly, homodimer. Part of the 2-oxoglutarate dehydrogenase (OGDH) complex composed of E1 (2-oxoglutarate dehydrogenase), E2 (dihydrolipoamide succinyltransferase) and E3 (dihydrolipoamide dehydrogenase); the complex contains multiple copies of the three enzymatic components (E1, E2 and E3). It depends on thiamine diphosphate as a cofactor.

It catalyses the reaction N(6)-[(R)-lipoyl]-L-lysyl-[protein] + 2-oxoglutarate + H(+) = N(6)-[(R)-S(8)-succinyldihydrolipoyl]-L-lysyl-[protein] + CO2. Functionally, E1 component of the 2-oxoglutarate dehydrogenase (OGDH) complex which catalyzes the decarboxylation of 2-oxoglutarate, the first step in the conversion of 2-oxoglutarate to succinyl-CoA and CO(2). In Azotobacter vinelandii, this protein is 2-oxoglutarate dehydrogenase E1 component (sucA).